A 294-amino-acid polypeptide reads, in one-letter code: Elongation factor Ts (294 aa).

An involved in Mg(2+) ion dislocation from EF-Tu region spans residues threonine 80 to valine 83.

The protein belongs to the EF-Ts family.

The protein resides in the cytoplasm. Associates with the EF-Tu.GDP complex and induces the exchange of GDP to GTP. It remains bound to the aminoacyl-tRNA.EF-Tu.GTP complex up to the GTP hydrolysis stage on the ribosome. The polypeptide is Elongation factor Ts (Listeria monocytogenes serovar 1/2a (strain ATCC BAA-679 / EGD-e)).